We begin with the raw amino-acid sequence, 282 residues long: Thiazole synthase (282 aa).

The active-site Schiff-base intermediate with DXP is Lys113. Residues Gly174, 201–202 (AG), and 223–224 (NT) each bind 1-deoxy-D-xylulose 5-phosphate.

Belongs to the ThiG family. Homotetramer. Forms heterodimers with either ThiH or ThiS.

It is found in the cytoplasm. It carries out the reaction [ThiS sulfur-carrier protein]-C-terminal-Gly-aminoethanethioate + 2-iminoacetate + 1-deoxy-D-xylulose 5-phosphate = [ThiS sulfur-carrier protein]-C-terminal Gly-Gly + 2-[(2R,5Z)-2-carboxy-4-methylthiazol-5(2H)-ylidene]ethyl phosphate + 2 H2O + H(+). The protein operates within cofactor biosynthesis; thiamine diphosphate biosynthesis. Catalyzes the rearrangement of 1-deoxy-D-xylulose 5-phosphate (DXP) to produce the thiazole phosphate moiety of thiamine. Sulfur is provided by the thiocarboxylate moiety of the carrier protein ThiS. In vitro, sulfur can be provided by H(2)S. The sequence is that of Thiazole synthase from Cupriavidus metallidurans (strain ATCC 43123 / DSM 2839 / NBRC 102507 / CH34) (Ralstonia metallidurans).